Reading from the N-terminus, the 1369-residue chain is Mediator of RNA polymerase II transcription subunit 23 (1369 aa).

A disordered region spans residues 1337-1369 (TESAAPPPPPMNSGSPAPQPNQVPVSVPLTVTQ). The span at 1341 to 1357 (APPPPPMNSGSPAPQPN) shows a compositional bias: pro residues.

Belongs to the Mediator complex subunit 23 family. Component of the Mediator complex.

It is found in the nucleus. Its function is as follows. Component of the Mediator complex, a coactivator involved in the regulated transcription of nearly all RNA polymerase II-dependent genes. Mediator functions as a bridge to convey information from gene-specific regulatory proteins to the basal RNA polymerase II transcription machinery. Mediator is recruited to promoters by direct interactions with regulatory proteins and serves as a scaffold for the assembly of a functional preinitiation complex with RNA polymerase II and the general transcription factors. In Xenopus laevis (African clawed frog), this protein is Mediator of RNA polymerase II transcription subunit 23 (med23).